The following is a 79-amino-acid chain: Sulfur carrier protein TusA (79 aa).

The Cysteine persulfide intermediate role is filled by C17.

Belongs to the sulfur carrier protein TusA family.

It localises to the cytoplasm. In terms of biological role, sulfur carrier protein which probably makes part of a sulfur-relay system. This Haemophilus ducreyi (strain 35000HP / ATCC 700724) protein is Sulfur carrier protein TusA.